The sequence spans 420 residues: Dynein axonemal assembly factor 4 (420 aa).

One can recognise a CS domain in the interval 3-87 (VRVSEFSWQQ…KEPVLWESLS (85 aa)). The tract at residues 7–103 (EFSWQQTPAA…EMMQRIREKS (97 aa)) is mediates interaction with ESR1 and STUB1. Over residues 165-192 (CQKKADGQKRVQRKEKPLQGKQAEERGA) the composition is skewed to basic and acidic residues. The segment at 165-212 (CQKKADGQKRVQRKEKPLQGKQAEERGALKPQSLPRKAPPTRLPTRGR) is disordered. TPR repeat units lie at residues 288–321 (PDWL…NRKI), 323–355 (VLYL…LTPP), and 364–397 (MKAH…DPAN).

Interacts with ZMYND10. Interacts with STUB1. Interacts with ESR1 and ESR2. Interacts with DNAAF2. Interacts with CCT3, CCT4, CCT5 and CCT8. Interacts with DNAAF6/PIH1D3.

It localises to the nucleus. The protein resides in the cytoplasm. The protein localises to the cell projection. Its subcellular location is the neuron projection. It is found in the dynein axonemal particle. Its function is as follows. Involved in neuronal migration during development of the cerebral neocortex. May regulate the stability and proteasomal degradation of the estrogen receptors that play an important role in neuronal differentiation, survival and plasticity. Axonemal dynein assembly factor required for ciliary motility. This chain is Dynein axonemal assembly factor 4, found in Rattus norvegicus (Rat).